The primary structure comprises 874 residues: Alanine--tRNA ligase (874 aa).

The Zn(2+) site is built by H562, H566, C664, and H668.

Belongs to the class-II aminoacyl-tRNA synthetase family. It depends on Zn(2+) as a cofactor.

It localises to the cytoplasm. The enzyme catalyses tRNA(Ala) + L-alanine + ATP = L-alanyl-tRNA(Ala) + AMP + diphosphate. In terms of biological role, catalyzes the attachment of alanine to tRNA(Ala) in a two-step reaction: alanine is first activated by ATP to form Ala-AMP and then transferred to the acceptor end of tRNA(Ala). Also edits incorrectly charged Ser-tRNA(Ala) and Gly-tRNA(Ala) via its editing domain. The polypeptide is Alanine--tRNA ligase (Shewanella putrefaciens (strain CN-32 / ATCC BAA-453)).